A 219-amino-acid polypeptide reads, in one-letter code: Putative NAD(P)H nitroreductase SSP0379 (219 aa).

Belongs to the nitroreductase family. FMN serves as cofactor.

The chain is Putative NAD(P)H nitroreductase SSP0379 from Staphylococcus saprophyticus subsp. saprophyticus (strain ATCC 15305 / DSM 20229 / NCIMB 8711 / NCTC 7292 / S-41).